The following is a 304-amino-acid chain: Glutaminase (304 aa).

7 residues coordinate substrate: Ser63, Asn113, Glu157, Asn164, Tyr188, Tyr240, and Val258.

The protein belongs to the glutaminase family. Homotetramer.

It carries out the reaction L-glutamine + H2O = L-glutamate + NH4(+). The polypeptide is Glutaminase (Ralstonia nicotianae (strain ATCC BAA-1114 / GMI1000) (Ralstonia solanacearum)).